Reading from the N-terminus, the 203-residue chain is Flagellar transcriptional regulator FlhC (203 aa).

The Zn(2+) site is built by cysteine 161, cysteine 164, cysteine 181, and cysteine 184.

Belongs to the FlhC family. Heterohexamer composed of two FlhC and four FlhD subunits. Each FlhC binds a FlhD dimer, forming a heterotrimer, and a hexamer assembles by dimerization of two heterotrimers. The cofactor is Zn(2+).

It is found in the cytoplasm. In terms of biological role, functions in complex with FlhD as a master transcriptional regulator that regulates transcription of several flagellar and non-flagellar operons by binding to their promoter region. Activates expression of class 2 flagellar genes, including fliA, which is a flagellum-specific sigma factor that turns on the class 3 genes. Also regulates genes whose products function in a variety of physiological pathways. The protein is Flagellar transcriptional regulator FlhC of Cupriavidus necator (strain ATCC 17699 / DSM 428 / KCTC 22496 / NCIMB 10442 / H16 / Stanier 337) (Ralstonia eutropha).